Here is an 86-residue protein sequence, read N- to C-terminus: Ferredoxin YfhL (86 aa).

4Fe-4S ferredoxin-type domains follow at residues 1–29 (MALLITKKCINCDMCEPECPNEAISMGDH) and 31–65 (YEINSDKCTECVGHYETPTCQKVCPIPNTIVKDPA). Cysteine 9, cysteine 12, cysteine 15, cysteine 19, cysteine 38, cysteine 41, cysteine 50, and cysteine 54 together coordinate [4Fe-4S] cluster.

[4Fe-4S] cluster is required as a cofactor.

Ferredoxins are iron-sulfur proteins that transfer electrons in a wide variety of metabolic reactions. This is Ferredoxin YfhL (yfhL) from Escherichia coli (strain K12).